We begin with the raw amino-acid sequence, 2769 residues long: Teneurin-4 (2769 aa).

The segment covering 1-22 has biased composition (basic and acidic residues); it reads MDVKERKPYRSLTRRRDAERRY. The disordered stretch occupies residues 1–45; it reads MDVKERKPYRSLTRRRDAERRYTSSSADSEEGKAPQKSYSSSETL. The 341-residue stretch at 1–341 folds into the Teneurin N-terminal domain; the sequence is MDVKERKPYR…KPSKYCNWKC (341 aa). At 1–345 the chain is on the cytoplasmic side; it reads MDVKERKPYR…YCNWKCAALS (345 aa). Residue serine 124 is modified to Phosphoserine. Residues 130 to 233 form a disordered region; the sequence is RLWGRSTRSG…PPAGGAQEPA (104 aa). Residues 134–155 are compositionally biased toward low complexity; sequence RSTRSGRSSCLSSRANSNLTLT. The span at 156–166 shows a compositional bias: basic and acidic residues; it reads DTEHENTETDH. Position 178 is a phosphothreonine (threonine 178). Positions 187–211 are enriched in polar residues; it reads HTPNQHHAASINSLNRGNFTPRSNP. Residues 346–366 form a helical membrane-spanning segment; that stretch reads AIVISATLVILLAYFVAMHLF. At 367–2769 the chain is on the extracellular side; the sequence is GLNWHLQPME…FMRQSEMGRR (2403 aa). The disordered stretch occupies residues 400 to 426; that stretch reads PSGGTGLETPDRKGKGTTEGKPSSFFP. Residues 408 to 417 show a composition bias toward basic and acidic residues; that stretch reads TPDRKGKGTT. N-linked (GlcNAc...) asparagine glycosylation is present at asparagine 467. The disordered stretch occupies residues 507–526; sequence ARSLEGTPRQSRGTVPPSSH. Over residues 514–526 the composition is skewed to polar residues; the sequence is PRQSRGTVPPSSH. EGF-like domains lie at 562–593, 594–624, 626–658, 659–690, 692–725, 726–757, 758–787, and 788–831; these read SVDN…PDCG, RASC…AECD, PTNQ…ESCE, EVDC…TNCE, PRAT…HDCS, IEIC…ACDQ, RACH…EHCT, and IAHY…AGCD. Disulfide bonds link cysteine 566/cysteine 576, cysteine 570/cysteine 581, cysteine 583/cysteine 592, cysteine 601/cysteine 612, cysteine 614/cysteine 623, cysteine 630/cysteine 641, cysteine 635/cysteine 646, cysteine 648/cysteine 657, cysteine 662/cysteine 673, cysteine 667/cysteine 678, cysteine 680/cysteine 689, cysteine 700/cysteine 713, cysteine 715/cysteine 724, cysteine 729/cysteine 739, cysteine 733/cysteine 744, cysteine 746/cysteine 755, cysteine 760/cysteine 770, cysteine 764/cysteine 775, cysteine 777/cysteine 786, cysteine 800/cysteine 810, cysteine 804/cysteine 819, and cysteine 821/cysteine 830. N-linked (GlcNAc...) asparagine glycans are attached at residues asparagine 940 and asparagine 1259. 5 NHL repeats span residues 1216–1259, 1264–1308, 1334–1378, 1393–1444, and 1523–1566; these read SCPS…PSGN, LELR…IKST, TRCG…NGII, LSCD…VAGR, and CFSG…IRKN. The YD 1 repeat unit spans residues 1576–1595; that stretch reads YELSSPIDQELYLFDTTGKH. An N-linked (GlcNAc...) asparagine glycan is attached at asparagine 1609. YD repeat units follow at residues 1612 to 1632, 1675 to 1694, and 1695 to 1717; these read YTGD…VNVR, YHGN…WTTF, and YEYD…SSFR. Asparagine 1705, asparagine 1741, asparagine 1799, and asparagine 1884 each carry an N-linked (GlcNAc...) asparagine glycan. YD repeat units lie at residues 1887 to 1906, 1928 to 1946, 1947 to 1967, 1974 to 1991, 1992 to 2013, 2014 to 2031, 2034 to 2054, 2057 to 2077, 2085 to 2104, 2110 to 2127, 2128 to 2154, 2156 to 2169, 2170 to 2193, 2196 to 2216, 2217 to 2237, 2239 to 2259, 2271 to 2291, and 2293 to 2313; these read YSPG…ERME, YLEK…YIFE, FDKN…QTLE, YYRN…VIQD, FTED…VIYK, YGKL…TKVS, YDET…FTCT, YRQI…EGMV, YDNS…TPLP, YDDV…GVIY, YDIN…MKEV, YEIF…MTVQ, YDNM…TRYS, YDAD…WRYS, YDLN…LTPL, YDIR…DEDG, YNSA…SVRY, and YDGL…LQFF. N-linked (GlcNAc...) asparagine glycosylation is present at asparagine 1985. Asparagine 2188 carries N-linked (GlcNAc...) asparagine glycosylation. N-linked (GlcNAc...) asparagine glycosylation occurs at asparagine 2328. A YD 23 repeat occupies 2339 to 2380; that stretch reads YDLQGHLFAMELSSGDEFYIACDNIGTPLAVFSGTGLMIKQI. Asparagine 2646 carries N-linked (GlcNAc...) asparagine glycosylation.

It belongs to the tenascin family. Teneurin subfamily. In terms of assembly, homodimer; disulfide-linked. May also form heterodimer with either TENM1 or TENM2 or TENM3.

It is found in the cell membrane. Its subcellular location is the cell projection. It localises to the nucleus. The protein resides in the cytoplasm. Involved in neural development, regulating the establishment of proper connectivity within the nervous system. Plays a role in the establishment of the anterior-posterior axis during gastrulation. Regulates the differentiation and cellular process formation of oligodendrocytes and myelination of small-diameter axons in the central nervous system (CNS). Promotes activation of focal adhesion kinase. May function as a cellular signal transducer. In Homo sapiens (Human), this protein is Teneurin-4 (TENM4).